The primary structure comprises 363 residues: DNA replication and repair protein RecF (363 aa).

30–37 (GSNGSGKT) serves as a coordination point for ATP.

This sequence belongs to the RecF family.

The protein localises to the cytoplasm. The RecF protein is involved in DNA metabolism; it is required for DNA replication and normal SOS inducibility. RecF binds preferentially to single-stranded, linear DNA. It also seems to bind ATP. The chain is DNA replication and repair protein RecF from Photorhabdus laumondii subsp. laumondii (strain DSM 15139 / CIP 105565 / TT01) (Photorhabdus luminescens subsp. laumondii).